Consider the following 92-residue polypeptide: MTRSLKKNPFVANRLLRKIDNLNTKAEKEIIITWSRASTIIPTMIGHTIAIHNGKEHLPIYITDRMVGHKLGEFAPTLNFRGHAKSDNRSRR.

It belongs to the universal ribosomal protein uS19 family.

It is found in the plastid. Its subcellular location is the chloroplast. In terms of biological role, protein S19 forms a complex with S13 that binds strongly to the 16S ribosomal RNA. The polypeptide is Small ribosomal subunit protein uS19c (Daucus carota (Wild carrot)).